We begin with the raw amino-acid sequence, 451 residues long: NADH-quinone oxidoreductase subunit D (451 aa).

The protein belongs to the complex I 49 kDa subunit family. In terms of assembly, NDH-1 is composed of 14 different subunits. Subunits NuoB, C, D, E, F, and G constitute the peripheral sector of the complex.

The protein localises to the cell inner membrane. The enzyme catalyses a quinone + NADH + 5 H(+)(in) = a quinol + NAD(+) + 4 H(+)(out). Functionally, NDH-1 shuttles electrons from NADH, via FMN and iron-sulfur (Fe-S) centers, to quinones in the respiratory chain. The immediate electron acceptor for the enzyme in this species is believed to be a menaquinone. Couples the redox reaction to proton translocation (for every two electrons transferred, four hydrogen ions are translocated across the cytoplasmic membrane), and thus conserves the redox energy in a proton gradient. This Salinibacter ruber (strain DSM 13855 / M31) protein is NADH-quinone oxidoreductase subunit D.